The sequence spans 310 residues: Ornithine carbamoyltransferase (310 aa).

Carbamoyl phosphate is bound by residues 57–60 (STRT), Gln84, Arg108, and 135–138 (HPCQ). L-ornithine is bound by residues Asn166, Asp229, and 233-234 (SM). Carbamoyl phosphate contacts are provided by residues 269–270 (CL) and Arg297.

This sequence belongs to the aspartate/ornithine carbamoyltransferase superfamily. OTCase family.

It localises to the cytoplasm. The catalysed reaction is carbamoyl phosphate + L-ornithine = L-citrulline + phosphate + H(+). It functions in the pathway amino-acid biosynthesis; L-arginine biosynthesis; L-arginine from L-ornithine and carbamoyl phosphate: step 1/3. Its function is as follows. Reversibly catalyzes the transfer of the carbamoyl group from carbamoyl phosphate (CP) to the N(epsilon) atom of ornithine (ORN) to produce L-citrulline. This Thermosynechococcus vestitus (strain NIES-2133 / IAM M-273 / BP-1) protein is Ornithine carbamoyltransferase.